Consider the following 526-residue polypeptide: Protein MGF 505-2R (526 aa).

It belongs to the asfivirus MGF 505 family.

Functionally, plays a role in virus cell tropism, and may be required for efficient virus replication in macrophages. The polypeptide is Protein MGF 505-2R (African swine fever virus (isolate Pig/Kenya/KEN-50/1950) (ASFV)).